The primary structure comprises 452 residues: 1,4-beta-D-glucan cellobiohydrolase A (452 aa).

An N-terminal signal peptide occupies residues 1 to 17; it reads MHQRALLFSALLTAVRA. Asparagine 62 carries an N-linked (GlcNAc...) asparagine glycan. Residue glutamate 227 is the Nucleophile of the active site. Glutamate 232 serves as the catalytic Proton donor. Asparagine 285, asparagine 335, asparagine 402, and asparagine 445 each carry an N-linked (GlcNAc...) asparagine glycan.

This sequence belongs to the glycosyl hydrolase 7 (cellulase C) family.

It is found in the secreted. It catalyses the reaction Hydrolysis of (1-&gt;4)-beta-D-glucosidic linkages in cellulose and cellotetraose, releasing cellobiose from the non-reducing ends of the chains.. In terms of biological role, the biological conversion of cellulose to glucose generally requires three types of hydrolytic enzymes: (1) Endoglucanases which cut internal beta-1,4-glucosidic bonds; (2) Exocellobiohydrolases that cut the disaccharide cellobiose from the non-reducing end of the cellulose polymer chain; (3) Beta-1,4-glucosidases which hydrolyze the cellobiose and other short cello-oligosaccharides to glucose. This chain is 1,4-beta-D-glucan cellobiohydrolase A (cbhA), found in Aspergillus niger.